The sequence spans 485 residues: Carbohydrate sulfotransferase 7 (485 aa).

Residues 1-12 (MKGRRRRRREYC) are Cytoplasmic-facing. The helical; Signal-anchor for type II membrane protein transmembrane segment at 13–33 (KFTLLLALYTLLLLLVPSVLD) threads the bilayer. Topologically, residues 34 to 485 (SGSEQDKGGR…PLETNANWAT (452 aa)) are lumenal. Residues 66–88 (EQGAEVRFQAEGNPDRSPRPQGN) form a disordered region. A glycan (N-linked (GlcNAc...) asparagine) is linked at Asn-88. 109–115 (WRTGSSF) contacts 3'-phosphoadenylyl sulfate. N-linked (GlcNAc...) asparagine glycosylation is present at Asn-185. 3'-phosphoadenylyl sulfate is bound at residue 277–285 (RDPRAVHNS). Asn-406 is a glycosylation site (N-linked (GlcNAc...) asparagine). Ser-461 is modified (phosphoserine). The span at 465–475 (RDVKTVRKGET) shows a compositional bias: basic and acidic residues. A disordered region spans residues 465–485 (RDVKTVRKGETPLETNANWAT).

Belongs to the sulfotransferase 1 family. Gal/GlcNAc/GalNAc subfamily.

It localises to the golgi apparatus membrane. The catalysed reaction is chondroitin beta-D-glucuronate + n 3'-phosphoadenylyl sulfate = chondroitin 6'-sulfate + n adenosine 3',5'-bisphosphate + n H(+). Sulfotransferase that utilizes 3'-phospho-5'-adenylyl sulfate (PAPS) as sulfonate donor to catalyze the transfer of sulfate to position 6 of non-reducing N-acetylglucosamine (GlcNAc) residues. Preferentially acts on mannose-linked GlcNAc. Also able to catalyze the transfer of sulfate to position 6 of the N-acetylgalactosamine (GalNAc) residue of chondroitin. Also acts on core 2 mucin-type oligosaccharide and N-acetyllactosamine oligomer with a lower efficiency. Has weak or no activity toward keratan sulfate and oligosaccharides containing the Galbeta1-4GlcNAc. Catalyzes 6-O-sulfation of beta-benzyl GlcNAc but not alpha- or beta-benzyl GalNAc. This Rattus norvegicus (Rat) protein is Carbohydrate sulfotransferase 7 (Chst7).